The sequence spans 817 residues: Putative receptor protein kinase ZmPK1 (817 aa).

The first 28 residues, 1–28, serve as a signal peptide directing secretion; that stretch reads MPRPLAALLSTACILSFFIALFPRAASS. Residues 29 to 158 enclose the Bulb-type lectin domain; that stretch reads RDILPLGSSL…GGNTVWQSFD (130 aa). Residues 29–472 lie on the Extracellular side of the membrane; that stretch reads RDILPLGSSL…HKTGGGESKW (444 aa). N-linked (GlcNAc...) asparagine glycans are attached at residues Asn83, Asn128, Asn228, and Asn279. In terms of domain architecture, EGF-like spans 292 to 328; that stretch reads MTQPCNIHGLCGPNGICHYSPTPTCSCPPGYATRNPG. Disulfide bonds link Cys296–Cys308 and Cys302–Cys316. N-linked (GlcNAc...) asparagine glycans are attached at residues Asn329 and Asn339. In terms of domain architecture, PAN spans 342-424; that stretch reads CDRYDKRSMR…VRTIYLKLPT (83 aa). 2 disulfides stabilise this stretch: Cys376-Cys398 and Cys384-Cys386. Asn452 is a glycosylation site (N-linked (GlcNAc...) asparagine). A helical transmembrane segment spans residues 473-498; the sequence is FYFYGFIAAFFVVEVSFISFAWFFVL. The Cytoplasmic portion of the chain corresponds to 499-817; sequence KRELRPSELW…AVQTLLSADD (319 aa). In terms of domain architecture, Protein kinase spans 534 to 817; the sequence is RKFKVELGRG…AVQTLLSADD (284 aa). ATP is bound by residues 540-548 and Lys562; that span reads LGRGESGTV. Residue Asp658 is the Proton acceptor of the active site.

Belongs to the protein kinase superfamily. Ser/Thr protein kinase family. As to expression, expressed predominantly in the shoots and roots of young maize seedlings, and to a lesser extent in the silks.

The protein resides in the membrane. The catalysed reaction is L-seryl-[protein] + ATP = O-phospho-L-seryl-[protein] + ADP + H(+). The enzyme catalyses L-threonyl-[protein] + ATP = O-phospho-L-threonyl-[protein] + ADP + H(+). Functionally, probable receptor. Interaction with a ligand in the extracellular domain triggers the protein kinase activity of the cytoplasmic domain. This chain is Putative receptor protein kinase ZmPK1 (PK1), found in Zea mays (Maize).